A 349-amino-acid chain; its full sequence is Arginine kinase (349 aa).

One can recognise a Phosphagen kinase N-terminal domain in the interval 3-85 (DLAELWEKVS…LGPVILDYHK (83 aa)). 58-62 (GVGVY) contacts substrate. One can recognise a Phosphagen kinase C-terminal domain in the interval 113–349 (WIVSTRVRVG…EEIIKLEKAA (237 aa)). Residues 116–120 (STRVR) and His-179 each bind ATP. Residue Glu-219 participates in substrate binding. Residue Arg-223 participates in ATP binding. A substrate-binding site is contributed by Cys-265. Residues 274-278 (RASVH) and 302-307 (RGIHGE) each bind ATP. Glu-307 serves as a coordination point for substrate.

The protein belongs to the ATP:guanido phosphotransferase family.

It carries out the reaction L-arginine + ATP = N(omega)-phospho-L-arginine + ADP + H(+). This Liolophura japonica (Chiton) protein is Arginine kinase.